The primary structure comprises 429 residues: Enolase 1 (429 aa).

Glutamine 163 is a (2R)-2-phosphoglycerate binding site. Glutamate 205 acts as the Proton donor in catalysis. Residues aspartate 242, glutamate 287, and aspartate 314 each contribute to the Mg(2+) site. (2R)-2-phosphoglycerate-binding residues include lysine 339, arginine 368, serine 369, and lysine 390. Lysine 339 functions as the Proton acceptor in the catalytic mechanism.

It belongs to the enolase family. Mg(2+) serves as cofactor.

The protein localises to the cytoplasm. It localises to the secreted. The protein resides in the cell surface. It catalyses the reaction (2R)-2-phosphoglycerate = phosphoenolpyruvate + H2O. The protein operates within carbohydrate degradation; glycolysis; pyruvate from D-glyceraldehyde 3-phosphate: step 4/5. Functionally, catalyzes the reversible conversion of 2-phosphoglycerate (2-PG) into phosphoenolpyruvate (PEP). It is essential for the degradation of carbohydrates via glycolysis. The chain is Enolase 1 from Cupriavidus metallidurans (strain ATCC 43123 / DSM 2839 / NBRC 102507 / CH34) (Ralstonia metallidurans).